The sequence spans 344 residues: Ferrochelatase (344 aa).

The Fe cation site is built by histidine 214 and glutamate 295.

This sequence belongs to the ferrochelatase family.

It localises to the cytoplasm. It catalyses the reaction heme b + 2 H(+) = protoporphyrin IX + Fe(2+). Its pathway is porphyrin-containing compound metabolism; protoheme biosynthesis; protoheme from protoporphyrin-IX: step 1/1. Catalyzes the ferrous insertion into protoporphyrin IX. In Rhizobium etli (strain ATCC 51251 / DSM 11541 / JCM 21823 / NBRC 15573 / CFN 42), this protein is Ferrochelatase.